The chain runs to 208 residues: Small ribosomal subunit protein uS4 (208 aa).

The 62-residue stretch at 98 to 159 (RRLDNVIYRL…KSRTVAVITN (62 aa)) folds into the S4 RNA-binding domain.

It belongs to the universal ribosomal protein uS4 family. As to quaternary structure, part of the 30S ribosomal subunit. Contacts protein S5. The interaction surface between S4 and S5 is involved in control of translational fidelity.

In terms of biological role, one of the primary rRNA binding proteins, it binds directly to 16S rRNA where it nucleates assembly of the body of the 30S subunit. Its function is as follows. With S5 and S12 plays an important role in translational accuracy. This Desulfatibacillum aliphaticivorans protein is Small ribosomal subunit protein uS4.